Reading from the N-terminus, the 207-residue chain is Proteasome subunit beta 1 (207 aa).

The propeptide at 1-9 is removed in mature form; by autocatalysis; that stretch reads MWALDKIKG. The Nucleophile role is filled by Thr10.

This sequence belongs to the peptidase T1B family. As to quaternary structure, the 20S proteasome core is composed of 14 alpha and 14 beta subunits that assemble into four stacked heptameric rings, resulting in a barrel-shaped structure. The two inner rings, each composed of seven catalytic beta subunits, are sandwiched by two outer rings, each composed of seven alpha subunits. The catalytic chamber with the active sites is on the inside of the barrel. Has a gated structure, the ends of the cylinder being occluded by the N-termini of the alpha-subunits. Is capped at one or both ends by the proteasome regulatory ATPase, PAN.

Its subcellular location is the cytoplasm. It catalyses the reaction Cleavage of peptide bonds with very broad specificity.. With respect to regulation, the formation of the proteasomal ATPase PAN-20S proteasome complex, via the docking of the C-termini of PAN into the intersubunit pockets in the alpha-rings, triggers opening of the gate for substrate entry. Interconversion between the open-gate and close-gate conformations leads to a dynamic regulation of the 20S proteasome proteolysis activity. Functionally, component of the proteasome core, a large protease complex with broad specificity involved in protein degradation. This is Proteasome subunit beta 1 from Thermococcus sibiricus (strain DSM 12597 / MM 739).